Reading from the N-terminus, the 286-residue chain is Bifunctional protein FolD (286 aa).

Residues 166–168 (GAS) and Ile-232 each bind NADP(+).

It belongs to the tetrahydrofolate dehydrogenase/cyclohydrolase family. Homodimer.

The catalysed reaction is (6R)-5,10-methylene-5,6,7,8-tetrahydrofolate + NADP(+) = (6R)-5,10-methenyltetrahydrofolate + NADPH. It carries out the reaction (6R)-5,10-methenyltetrahydrofolate + H2O = (6R)-10-formyltetrahydrofolate + H(+). The protein operates within one-carbon metabolism; tetrahydrofolate interconversion. Catalyzes the oxidation of 5,10-methylenetetrahydrofolate to 5,10-methenyltetrahydrofolate and then the hydrolysis of 5,10-methenyltetrahydrofolate to 10-formyltetrahydrofolate. The polypeptide is Bifunctional protein FolD (Shewanella piezotolerans (strain WP3 / JCM 13877)).